Here is a 533-residue protein sequence, read N- to C-terminus: Ribonuclease Y (533 aa).

A disordered region spans residues 16-41; sequence VERIRRRAEQDAAEQTERVRREAEQI. Basic and acidic residues predominate over residues 22 to 41; it reads RAEQDAAEQTERVRREAEQI. Residues 223 to 289 enclose the KH domain; it reads VVSVLHLPSD…RITLTALVSD (67 aa). The 94-residue stretch at 349 to 442 folds into the HD domain; the sequence is VLAHLVESAH…TQAADQISGG (94 aa).

Belongs to the RNase Y family.

Endoribonuclease that initiates mRNA decay. This chain is Ribonuclease Y, found in Parafrankia sp. (strain EAN1pec).